Consider the following 121-residue polypeptide: MATEGDVELELETETSGPERPPEKPRKHDSGAADLERVTDYAEEKEIQSSNLETAMSVIGDRRSREQKAKQEREKELAKVTIKKEDLELIMTEMEISRAAAERSLREHMGNVVEALIALTN.

Acidic residues predominate over residues 1–13 (MATEGDVELELET). A disordered region spans residues 1 to 75 (MATEGDVELE…EQKAKQEREK (75 aa)). Basic and acidic residues-rich tracts occupy residues 20–47 (RPPE…EKEI) and 60–75 (GDRR…EREK). At Ser30 the chain carries Phosphoserine. The interval 52-121 (LETAMSVIGD…VVEALIALTN (70 aa)) is required for association with the NAA10-NAA15 complex. The stretch at 62–107 (RRSREQKAKQEREKELAKVTIKKEDLELIMTEMEISRAAAERSLRE) forms a coiled coil.

As to quaternary structure, component of the N-terminal acetyltransferase A (NatA)/HYPK complex at least composed of NAA10, NAA15 and HYPK, which has N-terminal acetyltransferase activity. Within the complex interacts with NAA10. Within the complex interacts with NAA15. Predominantly interacts with NAA15 in the NAA10-NAA15 complex (also called the NatA complex); the interaction with the NatA complex reduces the acetylation activity of the NatA complex. Interacts with HTT (via N-terminus). The NatA complex is required for HYPK stability and for reducing polyQ aggregation of HTT. Component of the N-terminal acetyltransferase E (NatE)/HYPK complex at least composed of NAA10, NAA15, NAA50 and HYPK. Within the complex interacts with NAA10 and NAA15. Does not interact with NAA50. Interaction with NAA15 reduces the capacity of NAA15 to interact with NAA50. Its capacity to interact with the NatA complex is reduced by NAA50. Does not interact with the N-terminal acetyltransferase B (NatB) complex component NAA25 or the N-terminal acetyltransferase C (NatC) complex component NAA35.

Its subcellular location is the nucleus. The protein resides in the cytoplasm. In terms of biological role, component of several N-terminal acetyltransferase complexes. Inhibits the N-terminal acetylation activity of the N-terminal acetyltransferase NAA10-NAA15 complex (also called the NatA complex). Has chaperone-like activity preventing polyglutamine (polyQ) aggregation of HTT in neuronal cells probably while associated with the NatA complex. May play a role in the NatA complex-mediated N-terminal acetylation of PCNP. This Homo sapiens (Human) protein is Huntingtin-interacting protein K.